The following is a 65-amino-acid chain: Large ribosomal subunit protein bL35 (65 aa).

The protein belongs to the bacterial ribosomal protein bL35 family.

The polypeptide is Large ribosomal subunit protein bL35 (Aeromonas hydrophila subsp. hydrophila (strain ATCC 7966 / DSM 30187 / BCRC 13018 / CCUG 14551 / JCM 1027 / KCTC 2358 / NCIMB 9240 / NCTC 8049)).